The primary structure comprises 926 residues: Peripheral plasma membrane protein CASK (926 aa).

Positions 12–276 (YELCEVIGKG…VYEALNHPWL (265 aa)) constitute a Protein kinase domain. Residues 18–26 (IGKGPFSVV) and lysine 41 contribute to the ATP site. A Phosphoserine modification is found at serine 51. The active site involves aspartate 141. 2 positions are modified to phosphoserine; by autocatalysis: serine 151 and serine 155. Threonine 182 carries the phosphothreonine modification. Positions 305 to 315 (KGAVLAAVSSH) are calmodulin-binding. The residue at position 313 (serine 313) is a Phosphoserine. 2 L27 domains span residues 343 to 398 (AERA…SPQI) and 402 to 455 (PSDA…YSDE). Residues 482–909 (MENVTRVRLV…DETIRHLEEA (428 aa)) are required for interaction with NRXN1 (via C-terminal tail). In terms of domain architecture, PDZ spans 490-571 (LVQFQKNTDE…SITFKIVPSY (82 aa)). Phosphoserine is present on residues serine 570 and tyrosine 571. The tract at residues 574–610 (QSSSCERDSPSTSRQSPANGHSSTNNSVSDLPSTTQP) is disordered. The 71-residue stretch at 612 to 682 (GRQIYVRAQF…PSPELQEWRV (71 aa)) folds into the SH3 domain. The 173-residue stretch at 739–911 (RKTLVLLGAH…TIRHLEEAVE (173 aa)) folds into the Guanylate kinase-like domain.

This sequence in the N-terminal section; belongs to the protein kinase superfamily. CAMK Ser/Thr protein kinase family. CaMK subfamily. Belongs to the MAGUK family. In terms of assembly, CASK and LIN7 form a tripartite complex with CASKIN1. Component of the brain-specific heterotrimeric complex (LIN-10-LIN-2-LIN-7 complex) composed of at least APBA1, CASK, and LIN7, which associates with the motor protein KIF17 to transport vesicles along microtubules. Forms a heterotrimeric complex with DLG1 and LIN7B via their L27 domains. Identified in a complex with ACTN4, IQGAP1, MAGI2, NPHS1, SPTAN1 and SPTBN1. Part of a complex containing CASK, TBR1 and TSPYL2. Interacts with WHRN. Interacts (via the PDZ, SH3 and guanylate kinase-like domains) with NRXN1 (via C-terminus). Interacts with CASKIN1, APBA1, LIN7(A/B/C), and L27 domain of DLG1 and isoform 2 of DLG4. Interacts with FCHSD2. Interacts with KIRREL3. Interacts with TBR1. Interacts with TSPYL2. Unlike other protein kinases, does not require a divalent cation such as magnesium for catalytic activity. serves as cofactor.

Its subcellular location is the nucleus. It is found in the cytoplasm. The protein resides in the cell membrane. The enzyme catalyses L-seryl-[protein] + ATP = O-phospho-L-seryl-[protein] + ADP + H(+). It carries out the reaction L-threonyl-[protein] + ATP = O-phospho-L-threonyl-[protein] + ADP + H(+). With respect to regulation, differs from archetypal CaMK members in that the kinase domain exhibits a constitutively active conformation and the autoinhibitory region does not engage in direct contact with the ATP-binding cleft, although it still binds Ca(2+)/CAM. Functionally, multidomain scaffolding Mg(2+)-independent protein kinase that catalyzes the phosphotransfer from ATP to proteins such as NRXN1, and plays a role in synaptic transmembrane protein anchoring and ion channel trafficking. Contributes to neural development and regulation of gene expression via interaction with the transcription factor TBR1. Binds to cell-surface proteins, including amyloid precursor protein, neurexins, and syndecans. May mediate a link between the extracellular matrix and the actin cytoskeleton via its interaction with syndecan and with the actin/spectrin-binding protein 4.1. Component of the LIN-10-LIN-2-LIN-7 complex, which associates with the motor protein KIF17 to transport vesicles containing N-methyl-D-aspartate (NMDA) receptor subunit NR2B along microtubules. In Mus musculus (Mouse), this protein is Peripheral plasma membrane protein CASK.